The sequence spans 65 residues: Large ribosomal subunit protein bL35 (65 aa).

A compositionally biased stretch (basic residues) spans Met-1–Lys-16. The disordered stretch occupies residues Met-1–Ser-24.

This sequence belongs to the bacterial ribosomal protein bL35 family.

The chain is Large ribosomal subunit protein bL35 from Leuconostoc mesenteroides subsp. mesenteroides (strain ATCC 8293 / DSM 20343 / BCRC 11652 / CCM 1803 / JCM 6124 / NCDO 523 / NBRC 100496 / NCIMB 8023 / NCTC 12954 / NRRL B-1118 / 37Y).